Consider the following 255-residue polypeptide: uncharacterized protein (255 aa).

A signal peptide spans 1–23 (MKRLNKLVLGISFLFLVISITAG). Residue cysteine 24 is the site of N-palmitoyl cysteine attachment. Cysteine 24 carries S-diacylglycerol cysteine lipidation.

Belongs to the staphylococcal tandem lipoprotein family.

Its subcellular location is the cell membrane. This is an uncharacterized protein from Staphylococcus aureus (strain N315).